Here is a 129-residue protein sequence, read N- to C-terminus: UPF0325 protein PC1_0937 (129 aa).

Belongs to the UPF0325 family.

This Pectobacterium carotovorum subsp. carotovorum (strain PC1) protein is UPF0325 protein PC1_0937.